The primary structure comprises 933 residues: MKLKETLNLGKTAFPMRAGLPNKEPQWQAAWEQAELYKKRQELNAGKPAFHLHDGPPYANGNIHVGHALNKISKDIIVRSKSMSGFQAPYVPGWDTHGLPIEQVLAKQGIKRKEMDLAEYLEMCRQYALSQVDKQRDDFKRLGVSADWENPYVTLDPQFEADQIRVFGAMAEKGYIYRGAKPVYWSWSSESALAEAEIEYHDIDSTSLYYANKVKDGKGILDTNTYIVVWTTTPFTVTASRGLTVGPDMDYLVVKPAGSDRQYVVAEGLLDSLAGKFGWESFETLASHKGADLEYIVTEHPWDTDVEELVILGDHVTLESGTGIVHTAPGFGEDDYNVGTKYKLEVAVTVDERGLMMENAGPDFHGQFYNKVTPIVIDKLGDLLLAQEVINHSYPFDWRTKKPIIWRAVPQWFASVSDFRQDILDEIEKTTFHPSWGETRLYNMIRDRGDWVISRQRAWGVPLPIFYAEDGTAIMTKEVTDHVADLFQENGSIIWWQKEAKDLLPEGFTHPGSPNGEFTKETDIMDVWFDSGSSWNGVMNTKENLSYPADLYLEGSDQYRGWFNSSLITSVAVNGHAPYKAILSQGFVLDGKGEKMSKSKGNIISPNDVAKQYGADILRLWVASVDTDNDVRVSMEILGQVSETYRKIRNTLRFLIANTSDFNPATDTVAYADLGTVDKYMTIVFNQLVATITDAYERYDFMAIYKAVVNFVTVDLSAFYLDFAKDVVYIEAANSLERRRMQTVFYDILVKITKLLTPILPHTTEEIWSYLEHESEAFVQLAEMPVAETFSAQEDILEAWSAFMTLRTQAQKALEEARNAKIIGKSLEAHLTIYASEEVKTLLTALDSDIALLLIVSQLTIADLADAPADAVAFEGVAFIVEHAIGEVCERSRRIDPTTRMRSYNAFVCDHSAKIIEENFPEAVAEGFEESGK.

The 'HIGH' region motif lies at 57–67 (PYANGNIHVGH). Residue E554 coordinates L-isoleucyl-5'-AMP. Positions 595 to 599 (KMSKS) match the 'KMSKS' region motif. Residue K598 coordinates ATP.

The protein belongs to the class-I aminoacyl-tRNA synthetase family. IleS type 1 subfamily. As to quaternary structure, monomer.

The protein localises to the cytoplasm. It catalyses the reaction tRNA(Ile) + L-isoleucine + ATP = L-isoleucyl-tRNA(Ile) + AMP + diphosphate. Functionally, catalyzes the attachment of isoleucine to tRNA(Ile). As IleRS can inadvertently accommodate and process structurally similar amino acids such as valine, to avoid such errors it has two additional distinct tRNA(Ile)-dependent editing activities. One activity is designated as 'pretransfer' editing and involves the hydrolysis of activated Val-AMP. The other activity is designated 'posttransfer' editing and involves deacylation of mischarged Val-tRNA(Ile). In Streptococcus pyogenes serotype M1, this protein is Isoleucine--tRNA ligase.